Here is a 1591-residue protein sequence, read N- to C-terminus: Dicer-like protein 1 (1591 aa).

2 stretches are compositionally biased toward basic and acidic residues: residues 1–20 (MEVHDGLKSPDKAAKSRYDD) and 41–52 (SKPRKISERKRA). A disordered region spans residues 1–52 (MEVHDGLKSPDKAAKSRYDDDRIDQDSEDEAVRLVANPDPSKPRKISERKRA). In terms of domain architecture, Helicase ATP-binding spans 115-298 (LFERAKQKNT…SYERATHELE (184 aa)). 128-135 (LDTGTGKT) lines the ATP pocket. The DEAH box signature appears at 242–245 (DEAH). In terms of domain architecture, Helicase C-terminal spans 439–607 (KLIEILAECF…CLSLPKDRIM (169 aa)). Positions 639 to 729 (SLVVLAEFVA…KSTLAKVLPA (91 aa)) constitute a Dicer dsRNA-binding fold domain. The PAZ domain occupies 888–1012 (TTTDRVPYNF…LVLETLLISQ (125 aa)). RNase III domains are found at residues 1050–1190 (IDIA…LTAQ) and 1243–1406 (CSQI…VDTG). Mg(2+) is bound by residues Glu-1283, Asp-1392, and Glu-1395. One can recognise a DRBM domain in the interval 1440–1514 (THITSIITTQ…AKQAVAIYED (75 aa)). 4 residues coordinate Zn(2+): Cys-1452, His-1485, Cys-1526, and Cys-1528.

This sequence belongs to the helicase family. Dicer subfamily. It depends on Mg(2+) as a cofactor. Requires Mn(2+) as cofactor.

Its function is as follows. Dicer-like endonuclease which seems not to be involved in cleaving double-stranded RNA in the RNA interference (RNAi) pathway, contrary to its DCL2 counterpart. The sequence is that of Dicer-like protein 1 (DCL1) from Pyricularia oryzae (strain 70-15 / ATCC MYA-4617 / FGSC 8958) (Rice blast fungus).